The following is a 174-amino-acid chain: Protein RESISTANCE TO POWDERY MILDEW 8.2 (174 aa).

The 153-residue stretch at 1–153 (MIAEVAAGGA…IMPQPKFEIH (153 aa)) folds into the RPW8 domain. The chain crosses the membrane as a helical span at residues 7–23 (AGGALGLALSVLHEAVK). Residues 68–145 (VNKRLKLLLE…EISTKLDKIM (78 aa)) are a coiled coil.

It belongs to the plant RPW8 protein family.

Its subcellular location is the membrane. Disease resistance (R) protein that induces localized, salicylic acid-dependent defenses. Confers resistance to powdery mildew (e.g. Erysiphe cichoracearum UCSC1). In Arabidopsis thaliana (Mouse-ear cress), this protein is Protein RESISTANCE TO POWDERY MILDEW 8.2.